Consider the following 288-residue polypeptide: MKMKAYAKINIALDAIGKREDNYHLLRMIMQTVDLYDVIDIEKSNDSNISISCNKHYVPTDERNLAYKAAVLFRDEFNIKDGVKINIKKNIPVAAGMAGGSTNAAAVLVIMNKLFNVNASLEVLKEIGLKIGADVPYCIEGGTALCEGIGEIITPLKPFENKILVVLKPNFGVSTKEVYTNLDINKIRKHVNIEGLIQAMENDDLDYVSKNMKNVLENVTLKKHTILKNIKEDMRKSGALGAMMSGSGPTVFAFFDDMLTAQRAFEFLKGKYKYSDVYITRTINSNNL.

The active site involves Lys8. 92–102 contacts ATP; that stretch reads PVAAGMAGGST. The active site involves Asp134.

This sequence belongs to the GHMP kinase family. IspE subfamily.

It carries out the reaction 4-CDP-2-C-methyl-D-erythritol + ATP = 4-CDP-2-C-methyl-D-erythritol 2-phosphate + ADP + H(+). The protein operates within isoprenoid biosynthesis; isopentenyl diphosphate biosynthesis via DXP pathway; isopentenyl diphosphate from 1-deoxy-D-xylulose 5-phosphate: step 3/6. Catalyzes the phosphorylation of the position 2 hydroxy group of 4-diphosphocytidyl-2C-methyl-D-erythritol. The chain is 4-diphosphocytidyl-2-C-methyl-D-erythritol kinase from Clostridium perfringens (strain ATCC 13124 / DSM 756 / JCM 1290 / NCIMB 6125 / NCTC 8237 / Type A).